Consider the following 214-residue polypeptide: Ras-related protein Rab-11A (214 aa).

Residues 20 to 28 (GDSGVGKSN), 39 to 45 (SLETKST), 68 to 72 (DTAGQ), 126 to 129 (NKSD), and 156 to 158 (SAL) each bind GTP. Residues 42-50 (TKSTIGVEF) carry the Effector region motif. S-geranylgeranyl cysteine attachment occurs at residues cysteine 213 and cysteine 214.

This sequence belongs to the small GTPase superfamily. Rab family.

It is found in the contractile vacuole membrane. Required for normal contractile vacuole structure and function. Cells expressing a dominant negative rab11A exhibit a more extensive contractile vacuole network and enlarged contractile vacuole bladders. These cells exhibit a functional defect in osmotic regulation where cells immersed in water become rounded and detach from the surface, and contain swollen contractile vacuoles. This Dictyostelium discoideum (Social amoeba) protein is Ras-related protein Rab-11A (rab11A).